We begin with the raw amino-acid sequence, 181 residues long: Negative modulator of initiation of replication (181 aa).

Interaction with DNA stretches follow at residues 87-88 (AV), 116-120 (RTRVY), and 150-156 (NTNTGRK).

This sequence belongs to the SeqA family. As to quaternary structure, homodimer. Polymerizes to form helical filaments.

The protein resides in the cytoplasm. Functionally, negative regulator of replication initiation, which contributes to regulation of DNA replication and ensures that replication initiation occurs exactly once per chromosome per cell cycle. Binds to pairs of hemimethylated GATC sequences in the oriC region, thus preventing assembly of replication proteins and re-initiation at newly replicated origins. Repression is relieved when the region becomes fully methylated. This chain is Negative modulator of initiation of replication, found in Shigella flexneri.